The sequence spans 174 residues: MDPTGIFDLPNTSLIFWEVVTFLILLALLYRYVYPIIRDQIQKRQAQIEQAIEEAEKTRAEARELLEEYRRQIEAARGEARQILDEARRQAKAQRERAREEAREEGDRIIQRAREEISRERDAALREVRREVADMVIMASSRVIGRELDAAEHERLINEALESLEAEVAGGRTA.

The helical transmembrane segment at 9 to 29 (LPNTSLIFWEVVTFLILLALL) threads the bilayer.

It belongs to the ATPase B chain family. As to quaternary structure, F-type ATPases have 2 components, F(1) - the catalytic core - and F(0) - the membrane proton channel. F(1) has five subunits: alpha(3), beta(3), gamma(1), delta(1), epsilon(1). F(0) has three main subunits: a(1), b(2) and c(10-14). The alpha and beta chains form an alternating ring which encloses part of the gamma chain. F(1) is attached to F(0) by a central stalk formed by the gamma and epsilon chains, while a peripheral stalk is formed by the delta and b chains.

It is found in the cell membrane. In terms of biological role, f(1)F(0) ATP synthase produces ATP from ADP in the presence of a proton or sodium gradient. F-type ATPases consist of two structural domains, F(1) containing the extramembraneous catalytic core and F(0) containing the membrane proton channel, linked together by a central stalk and a peripheral stalk. During catalysis, ATP synthesis in the catalytic domain of F(1) is coupled via a rotary mechanism of the central stalk subunits to proton translocation. Component of the F(0) channel, it forms part of the peripheral stalk, linking F(1) to F(0). The protein is ATP synthase subunit b of Rubrobacter xylanophilus (strain DSM 9941 / JCM 11954 / NBRC 16129 / PRD-1).